Consider the following 231-residue polypeptide: Dephospho-CoA kinase domain-containing protein (231 aa).

The DPCK domain maps to 3-207 (LVGLTGGIAS…HSLEYLPLRL (205 aa)). 8-15 (GGIASGKS) is an ATP binding site.

It belongs to the CoaE family.

The chain is Dephospho-CoA kinase domain-containing protein (DCAKD) from Bos taurus (Bovine).